Consider the following 84-residue polypeptide: Molybdopterin synthase sulfur carrier subunit (84 aa).

G84 is subject to 1-thioglycine; alternate. Residue G84 is modified to Glycyl adenylate; alternate.

Belongs to the MoaD family. MOCS2A subfamily. In terms of assembly, heterotetramer; composed of 2 small (MOCS2A) and 2 large (MOCS2B) subunits. Post-translationally, C-terminal thiocarboxylation occurs in 2 steps, it is first acyl-adenylated (-COAMP) via the hesA/moeB/thiF part of MOCS3, then thiocarboxylated (-COSH) via the rhodanese domain of MOCS3.

It localises to the cytoplasm. It functions in the pathway cofactor biosynthesis; molybdopterin biosynthesis. Acts as a sulfur carrier required for molybdopterin biosynthesis. Component of the molybdopterin synthase complex that catalyzes the conversion of precursor Z into molybdopterin by mediating the incorporation of 2 sulfur atoms into precursor Z to generate a dithiolene group. In the complex, serves as sulfur donor by being thiocarboxylated (-COSH) at its C-terminus by MOCS3. After interaction with MOCS2B, the sulfur is then transferred to precursor Z to form molybdopterin. The polypeptide is Molybdopterin synthase sulfur carrier subunit (Caenorhabditis briggsae).